The chain runs to 66 residues: U1-theraphotoxin-Cg1a 2 (66 aa).

An N-terminal signal peptide occupies residues M1–A21. Residues A22–R29 constitute a propeptide that is removed on maturation. 3 disulfide bridges follow: C31-C46, C38-C51, and C45-C58. P63 bears the Proline amide mark.

Belongs to the neurotoxin 10 (Hwtx-1) family. 46 (Jztx-7/10/12) subfamily. As to expression, expressed by the venom gland.

Its subcellular location is the secreted. Probable ion channel inhibitor. This chain is U1-theraphotoxin-Cg1a 2, found in Chilobrachys guangxiensis (Chinese earth tiger tarantula).